A 203-amino-acid chain; its full sequence is MKAVKLTAAVVVLFMAPYVPITSSRSLAETPNDSIDRHLRHESAQIDSKLKEVEGKHDSNTPLQRRDQTLVAAHRVYDPVSGLACSLVGECMSCPITEKDESFCRETGYRQELACPHSKDEALLQTLEEKQTPRYRPCSPADTVRPGVTFVKFEAIMSLLLAISVTLLRREREKHMSSFDLRKDSRQRVGLLNSSASGVKDSD.

The signal sequence occupies residues 1 to 24 (MKAVKLTAAVVVLFMAPYVPITSS). N-linked (GlcNAc...) asparagine glycosylation occurs at asparagine 32. Positions 37–40 (RHLR) match the RxLR motif. The N-linked (GlcNAc...) asparagine glycan is linked to asparagine 193.

It belongs to the RxLR effector family.

The protein resides in the secreted. It localises to the host cytoplasm. In terms of biological role, secreted effector that does not suppress pattern-triggered immunity (PTI) in plant host. This is Secreted RxLR effector protein RXLR-C28 from Plasmopara halstedii (Downy mildew of sunflower).